Consider the following 414-residue polypeptide: Tyrosine--tRNA ligase (414 aa).

Tyr38 contributes to the L-tyrosine binding site. The short motif at 43–52 (PTATSLHLGN) is the 'HIGH' region element. Positions 165 and 169 each coordinate L-tyrosine. The 'KMSKS' region signature appears at 228–232 (KFGKS). Lys231 serves as a coordination point for ATP. The region spanning 349–414 (FNANQIIDLG…KKYFFMIELI (66 aa)) is the S4 RNA-binding domain.

Belongs to the class-I aminoacyl-tRNA synthetase family. TyrS type 1 subfamily. Homodimer.

The protein resides in the cytoplasm. The enzyme catalyses tRNA(Tyr) + L-tyrosine + ATP = L-tyrosyl-tRNA(Tyr) + AMP + diphosphate + H(+). Its function is as follows. Catalyzes the attachment of tyrosine to tRNA(Tyr) in a two-step reaction: tyrosine is first activated by ATP to form Tyr-AMP and then transferred to the acceptor end of tRNA(Tyr). This chain is Tyrosine--tRNA ligase, found in Mesomycoplasma hyopneumoniae (strain 7448) (Mycoplasma hyopneumoniae).